The following is a 305-amino-acid chain: Protein ORANGE, chloroplastic (305 aa).

The N-terminal 54 residues, 1–54 (MSCLGRILSVSYPPDPYGSRLSVSKLSSPGRNRRLRWRFTALDSDSSSLDSDSS), are a transit peptide targeting the chloroplast. Helical transmembrane passes span 144–164 (VYYA…GLLA) and 197–217 (IVAS…VVEV). Residues 206 to 297 (VGVISALMVV…CTGMAMASEH (92 aa)) are CR-type-like. The CXXCXGXG motif repeat unit spans residues 228–235 (CKYCLGTG). A CXXCXXXG motif repeat occupies 239 to 246 (CARCSSTG). A CXXCXGXG motif repeat occupies 272 to 279 (CSNCSGAG). A CXXCXXXG motif repeat occupies 283-290 (CPTCLCTG).

This sequence belongs to the orange-like family. In terms of assembly, interacts with ERF1-2. In terms of tissue distribution, expressed in young leaves, curds and flower buds.

Its subcellular location is the plastid. The protein localises to the chloroplast membrane. It is found in the nucleus. In terms of biological role, involved in chromoplast differentiation. Is associated with a cellular process that triggers the differentiation of pro-plastids or other non-colored plastids into chromoplasts for carotenoid accumulation. Associated with carotenoid accumulation in de-etiolated cotyledons. Controls leaf petiole elongation by suppressing the expression of ERF1 genes. This chain is Protein ORANGE, chloroplastic, found in Brassica oleracea var. botrytis (Cauliflower).